The primary structure comprises 369 residues: Nuclear pore complex-interacting protein family member A6 (369 aa).

The disordered stretch occupies residues 151–170; it reads SMKEREHGEKERQVSEAEEN.

This sequence belongs to the NPIP family.

The chain is Nuclear pore complex-interacting protein family member A6 from Homo sapiens (Human).